Consider the following 397-residue polypeptide: Polyphosphatase (397 aa).

Mg(2+)-binding residues include Asp-41, Asp-127, and His-148. Mn(2+) is bound by residues Asp-41, Asp-127, and His-148. ATP contacts are provided by His-149, Ser-286, and Arg-381.

It belongs to the PPase class C family. The cofactor is Mn(2+). Mg(2+) serves as cofactor.

It catalyses the reaction [phosphate](n) + H2O = [phosphate](n-1) + phosphate + H(+). In terms of biological role, polyphosphatase (polyPase) involved in the degradation of inorganic polyphosphates (polyP) that is able to degrade a range of chains from three to several hundreds of residues in a highly processive manner. Exclusively shows exopolyphosphatase activity, cleaving inside the polyP chain. The sequence is that of Polyphosphatase from Saccharomyces cerevisiae (strain ATCC 204508 / S288c) (Baker's yeast).